We begin with the raw amino-acid sequence, 149 residues long: UPF0179 protein MA_3685 (149 aa).

Belongs to the UPF0179 family.

This chain is UPF0179 protein MA_3685, found in Methanosarcina acetivorans (strain ATCC 35395 / DSM 2834 / JCM 12185 / C2A).